The primary structure comprises 204 residues: Proteasome subunit beta type-3 (204 aa).

The protein belongs to the peptidase T1B family. As to quaternary structure, the 26S proteasome consists of a 20S proteasome core and two 19S regulatory subunits. The 20S proteasome core is composed of 28 subunits that are arranged in four stacked rings, resulting in a barrel-shaped structure. The two end rings are each formed by seven alpha subunits, and the two central rings are each formed by seven beta subunits. The catalytic chamber with the active sites is on the inside of the barrel.

The protein localises to the cytoplasm. It localises to the nucleus. Its function is as follows. Non-catalytic component of the proteasome, a multicatalytic proteinase complex which is characterized by its ability to cleave peptides with Arg, Phe, Tyr, Leu, and Glu adjacent to the leaving group at neutral or slightly basic pH. The proteasome has an ATP-dependent proteolytic activity. This Caenorhabditis elegans protein is Proteasome subunit beta type-3 (pbs-3).